A 395-amino-acid chain; its full sequence is Calcium sensing receptor, chloroplastic (395 aa).

The span at 1–12 (MAPVPVSVSATL) shows a compositional bias: low complexity. Residues 1-27 (MAPVPVSVSATLAPPPAAPPKTTSRSW) are disordered. Residues 1–39 (MAPVPVSVSATLAPPPAAPPKTTSRSWERRAPADAAFAA) constitute a chloroplast transit peptide. The Lumenal, thylakoid portion of the chain corresponds to 40-182 (ASSVAGSAAL…TITSLGPEDY (143 aa)). A helical transmembrane segment spans residues 183 to 203 (VVAAGXAFLAYLLVPPVWSLV). The Stromal segment spans residues 204–395 (SSSLRGYKGD…TRKLLPGGVD (192 aa)). The Rhodanese domain occupies 224–345 (TTQGYVLIDV…WAQSRLGTDS (122 aa)). Phosphothreonine is present on Thr377.

Post-translationally, phosphorylated in both bundle sheath and mesophyll cells, under both low and high light regimes (70 vs 900 umol photons/m-2/s).

The protein localises to the plastid. It localises to the chloroplast thylakoid membrane. Modulates cytoplasmic Ca(2+) concentration and is crucial for proper stomatal regulation in response to elevated levels of external Ca(2+). May function by regulating concentrations of inositol 1,4,5-trisphosphate (IP3), which in turn triggers release of Ca(2+) from internal stores. May play a role in de-etiolation. This chain is Calcium sensing receptor, chloroplastic, found in Zea mays (Maize).